A 447-amino-acid polypeptide reads, in one-letter code: Elongation factor 1-alpha (447 aa).

The region spanning 5–230 (KTHINIVVIG…DQINEPKRPS (226 aa)) is the tr-type G domain. A G1 region spans residues 14 to 21 (GHVDSGKS). 14-21 (GHVDSGKS) contacts GTP. Position 55 is an N6,N6-dimethyllysine (K55). The interval 70 to 74 (GITID) is G2. K79 is modified (N6,N6,N6-trimethyllysine). The tract at residues 91-94 (DAPG) is G3. Residues 91-95 (DAPGH) and 153-156 (NKMD) contribute to the GTP site. The tract at residues 153 to 156 (NKMD) is G4. At K187 the chain carries N6,N6,N6-trimethyllysine. Residues 194-196 (SGF) form a G5 region. K261 carries the post-translational modification N6-methyllysine. E289 carries the 5-glutamyl glycerylphosphorylethanolamine modification. K306 bears the N6,N6,N6-trimethyllysine mark. A 5-glutamyl glycerylphosphorylethanolamine modification is found at E362. K396 carries the post-translational modification N6,N6,N6-trimethyllysine.

It belongs to the TRAFAC class translation factor GTPase superfamily. Classic translation factor GTPase family. EF-Tu/EF-1A subfamily.

It is found in the cytoplasm. This protein promotes the GTP-dependent binding of aminoacyl-tRNA to the A-site of ribosomes during protein biosynthesis. This is Elongation factor 1-alpha (REFA1) from Oryza sativa subsp. japonica (Rice).